Consider the following 178-residue polypeptide: Small ribosomal subunit protein uS4 (178 aa).

The S4 RNA-binding domain maps to 104–166 (RRLQTIVFRK…SNSPMASENH (63 aa)). A disordered region spans residues 158-178 (NSPMASENHPERTAATSEENQ).

The protein belongs to the universal ribosomal protein uS4 family. Part of the 30S ribosomal subunit. Contacts protein S5. The interaction surface between S4 and S5 is involved in control of translational fidelity.

Functionally, one of the primary rRNA binding proteins, it binds directly to 16S rRNA where it nucleates assembly of the body of the 30S subunit. Its function is as follows. With S5 and S12 plays an important role in translational accuracy. This is Small ribosomal subunit protein uS4 from Methanococcus maripaludis (strain DSM 14266 / JCM 13030 / NBRC 101832 / S2 / LL).